The sequence spans 41 residues: Ostricacin-2 (41 aa).

Disulfide bonds link Cys8-Cys36, Cys15-Cys30, and Cys20-Cys37.

The protein localises to the secreted. In terms of biological role, has antibacterial activity against the Gram-positive bacterium S.aureus 1056 MRSA (MIC=1.25 ug/ml) and the Gram-negative bacterium E.coli O157:H7 (MIC=0.96 ug/ml). Has antifungal activity against the yeast C.albicans 3153A (MIC=6.20 ug/ml). This chain is Ostricacin-2, found in Struthio camelus (Common ostrich).